The primary structure comprises 144 residues: 3-dehydroquinate dehydratase (144 aa).

The active-site Proton acceptor is Y22. Residues N73, H79, and D86 each contribute to the substrate site. Residue H99 is the Proton donor of the active site. Substrate contacts are provided by residues 100–101 (LS) and R110.

Belongs to the type-II 3-dehydroquinase family. Homododecamer.

The enzyme catalyses 3-dehydroquinate = 3-dehydroshikimate + H2O. It functions in the pathway metabolic intermediate biosynthesis; chorismate biosynthesis; chorismate from D-erythrose 4-phosphate and phosphoenolpyruvate: step 3/7. Its function is as follows. Catalyzes a trans-dehydration via an enolate intermediate. The chain is 3-dehydroquinate dehydratase from Herpetosiphon aurantiacus (strain ATCC 23779 / DSM 785 / 114-95).